Reading from the N-terminus, the 467-residue chain is ATP synthase subunit beta (467 aa).

157 to 164 provides a ligand contact to ATP; the sequence is GGAGVGKT.

It belongs to the ATPase alpha/beta chains family. As to quaternary structure, F-type ATPases have 2 components, CF(1) - the catalytic core - and CF(0) - the membrane proton channel. CF(1) has five subunits: alpha(3), beta(3), gamma(1), delta(1), epsilon(1). CF(0) has three main subunits: a(1), b(2) and c(9-12). The alpha and beta chains form an alternating ring which encloses part of the gamma chain. CF(1) is attached to CF(0) by a central stalk formed by the gamma and epsilon chains, while a peripheral stalk is formed by the delta and b chains.

The protein resides in the cell inner membrane. The enzyme catalyses ATP + H2O + 4 H(+)(in) = ADP + phosphate + 5 H(+)(out). Produces ATP from ADP in the presence of a proton gradient across the membrane. The catalytic sites are hosted primarily by the beta subunits. The chain is ATP synthase subunit beta from Desulfosudis oleivorans (strain DSM 6200 / JCM 39069 / Hxd3) (Desulfococcus oleovorans).